The following is a 1066-amino-acid chain: Microtubule-associated protein 1S (1066 aa).

The segment at 1 to 804 (MAATVAGSGA…SESLPTLSDS (804 aa)) is necessary for the microtubule-organizing center localization. Phosphoserine is present on residues S320 and S472. The interval 462–707 (QDMAGPRRAE…EVDESLSVSF (246 aa)) is disordered. 2 stretches are compositionally biased toward basic and acidic residues: residues 466 to 487 (GPRR…REGR) and 500 to 530 (GVAR…KDPR). S582 carries the phosphoserine modification. Polar residues predominate over residues 597–614 (ACSSPAPQLVATPSQESS). Position 647 is a phosphothreonine (T647). Phosphoserine is present on residues S649, S660, S665, S667, S737, and S765. Low complexity predominate over residues 656 to 671 (GPTESSGPLSLSPLRG). The interval 676–1066 (PDASPTVTTP…EAFPACKVEF (391 aa)) is necessary for interaction with RASSF1. Residues 720 to 973 (EAGLSLPLCG…GGSARLVDEE (254 aa)) form a necessary for association with microtubules region. Positions 758–950 (PMAPAPVSPG…SRSGGSAAPP (193 aa)) are disordered. Composition is skewed to polar residues over residues 766–775 (PGSSNDSSAR) and 790–803 (PPTS…TLSD). The residue at position 816 (S816) is a Phosphoserine. Pro residues predominate over residues 832–845 (PDPLKIPPPLPTPP). Composition is skewed to low complexity over residues 880-894 (TTPP…AKIK) and 933-949 (RGPS…SAAP). A necessary for association with actin region spans residues 967-1066 (ARLVDEEFFR…EAFPACKVEF (100 aa)). A necessary for the mitochondrial aggregation and genome destruction region spans residues 974 to 998 (FFRRVRALCYVISGQDQHKEEGMRA).

Belongs to the MAP1 family. As to quaternary structure, heterodimer of a heavy and a light chain. Interacts with microtubules and actin. Both MAP1S heavy and light chains interact with microtubules. MAP1S light chain interacts with actin. Interacts (via C-terminus) with GAN (via Kelch domains). Interacts with ESR1, LRPPRC, RASSF1, microtubules and VCY2. Interacts with ESR1, LRPPRC, RASSF1, microtubules and VCY2. Interacts with WDR47 (via N-terminus of light chain).

The protein localises to the nucleus. The protein resides in the cytoplasm. Its subcellular location is the cytosol. It is found in the cytoskeleton. It localises to the spindle. Microtubule-associated protein that mediates aggregation of mitochondria resulting in cell death and genomic destruction (MAGD). Plays a role in anchoring the microtubule organizing center to the centrosomes. Binds to DNA. Plays a role in apoptosis. Involved in the formation of microtubule bundles. The protein is Microtubule-associated protein 1S (MAP1S) of Bos taurus (Bovine).